The primary structure comprises 384 residues: MAMRQAAKATIRACSSSSSSGYFARRQFNASSGDSKKIVGVFYKANEYATKNPNFLGCVENALGIRDWLESQGHQYIVTDDKEGPDCELEKHIPDLHVLISTPFHPAYVTAERIKKAKNLKLLLTAGIGSDHIDLQAAAAAGLTVAEVTGSNVVSVAEDELMRILILMRNFVPGYNQVVKGEWNVAGIAYRAYDLEGKTIGTVGAGRIGKLLLQRLKPFGCNLLYHDRLQMAPELEKETGAKFVEDLNEMLPKCDVIVINMPLTEKTRGMFNKELIGKLKKGVLIVNNARGAIMERQAVVDAVESGHIGGYSGDVWDPQPAPKDHPWRYMPNQAMTPHTSGTTIDAQLRYAAGTKDMLERYFKGEDFPTENYIVKDGELAPQYR.

The N-terminal 29 residues, 1-29 (MAMRQAAKATIRACSSSSSSGYFARRQFN), are a transit peptide targeting the chloroplast and mitochondrion. Positions 128 and 152 each coordinate substrate. NAD(+) is bound by residues 207–208 (RI), D227, 262–266 (PLTEK), N288, D314, and 338–341 (HTSG).

The protein belongs to the D-isomer specific 2-hydroxyacid dehydrogenase family. FDH subfamily. As to quaternary structure, homodimer.

It is found in the mitochondrion. The protein resides in the plastid. The protein localises to the chloroplast. It carries out the reaction formate + NAD(+) = CO2 + NADH. Catalyzes the NAD(+)-dependent oxidation of formate to carbon dioxide. Involved in the cell stress response. The protein is Formate dehydrogenase, chloroplastic/mitochondrial (FDH1) of Arabidopsis thaliana (Mouse-ear cress).